The sequence spans 227 residues: MSTSLTWHDVIGKEKEQPYFHETLAFVAAERQAGKTIYPPQKDVFNAFRYTELADVKVVILGQDPYHGPNQAHGLSFSVLPGVPAPPSLVNMYKELATDIPGFERPSHGCLQSWAEQGVLLLNTVLTVEGGQAHSHAKLGWETFTDKVIAALNENREGVVFLLWGAHAQKKGNFIDSNRHHVLKAPHPSPLSAHRGFLGCRHFSQANQLLVQQGLQPIDWLPQLPQS.

Catalysis depends on D64, which acts as the Proton acceptor.

Belongs to the uracil-DNA glycosylase (UDG) superfamily. UNG family.

The protein resides in the cytoplasm. The enzyme catalyses Hydrolyzes single-stranded DNA or mismatched double-stranded DNA and polynucleotides, releasing free uracil.. Functionally, excises uracil residues from the DNA which can arise as a result of misincorporation of dUMP residues by DNA polymerase or due to deamination of cytosine. This Serratia proteamaculans (strain 568) protein is Uracil-DNA glycosylase.